A 607-amino-acid chain; its full sequence is UvrABC system protein C (607 aa).

In terms of domain architecture, GIY-YIG spans 16-94; sequence GRPGVYRMFD…IKEWRPPYNI (79 aa). Residues 203–238 form the UVR domain; that stretch reads NALSDELNASMEKAAMALDFERAAELRDQVALLRRV.

This sequence belongs to the UvrC family. As to quaternary structure, interacts with UvrB in an incision complex.

The protein localises to the cytoplasm. Its function is as follows. The UvrABC repair system catalyzes the recognition and processing of DNA lesions. UvrC both incises the 5' and 3' sides of the lesion. The N-terminal half is responsible for the 3' incision and the C-terminal half is responsible for the 5' incision. In Pseudomonas syringae pv. tomato (strain ATCC BAA-871 / DC3000), this protein is UvrABC system protein C.